The primary structure comprises 775 residues: Kojibiose phosphorylase (775 aa).

361–362 (WD) lines the substrate pocket. The active-site Proton donor is Glu-501. 614-615 (KQ) contributes to the substrate binding site.

Belongs to the glycosyl hydrolase 65 family. In terms of assembly, homohexamer.

The enzyme catalyses kojibiose + phosphate = beta-D-glucose 1-phosphate + D-glucose. Inhibited by Hg(2+) and Pb(2+). Functionally, catalyzes the reversible phosphorolysis of kojibiose into beta-D-glucose 1-phosphate (Glc1P) and D-glucose. Can act with alpha-1,2-oligoglucans, such as selaginose, but more slowly. Inactive when disaccharides with linkages other than alpha-1,2 linkages, such as sophorose, trehalose, neotrehalose, nigerose, laminaribiose, maltose, cellobiose, isomaltose, gentiobiose, sucrose and lactose, are used as substrates. In contrast, shows broad specificity for the reverse reaction. Various monosaccharides and disaccharides having a glucosyl residue at the non-reducing end are effective acceptors. In Thermoanaerobacter brockii (Thermoanaerobium brockii), this protein is Kojibiose phosphorylase.